A 438-amino-acid chain; its full sequence is Glutaryl-CoA dehydrogenase, mitochondrial (438 aa).

The transit peptide at 1-44 (MALRGVYAQLLNRGPGLRVFRSWSSATAQTEKGEKTQSRSAKPS) directs the protein to the mitochondrion. Substrate-binding positions include 138–139 (RS) and Ser186. Residues 177–186 (FGLTEPNHGS), Ser186, and 212–214 (WIT) contribute to the FAD site. Lys240 is subject to N6-acetyllysine. Substrate is bound at residue 287–294 (FGCLNNAR). FAD contacts are provided by residues Arg319, Gln330, and 387 to 391 (DMLGG). Catalysis depends on Glu414, which acts as the Proton acceptor. Gly415 provides a ligand contact to substrate. Residues Thr416, 416 to 418 (THD), and Phe434 contribute to the FAD site.

This sequence belongs to the acyl-CoA dehydrogenase family. As to quaternary structure, homotetramer. The cofactor is FAD.

The protein localises to the mitochondrion matrix. The enzyme catalyses glutaryl-CoA + oxidized [electron-transfer flavoprotein] + 2 H(+) = (2E)-butenoyl-CoA + reduced [electron-transfer flavoprotein] + CO2. It participates in amino-acid metabolism; lysine degradation. Its pathway is amino-acid metabolism; tryptophan metabolism. Catalyzes the oxidative decarboxylation of glutaryl-CoA to crotonyl-CoA and CO(2) in the degradative pathway of L-lysine, L-hydroxylysine, and L-tryptophan metabolism. It uses electron transfer flavoprotein as its electron acceptor. This chain is Glutaryl-CoA dehydrogenase, mitochondrial (GCDH), found in Bos taurus (Bovine).